A 477-amino-acid polypeptide reads, in one-letter code: Glutamate--tRNA ligase 2 (477 aa).

Positions 12-22 match the 'HIGH' region motif; it reads PSPTGRMHLGN. Zn(2+)-binding residues include C109, C111, C136, and H138. The short motif at 253–257 is the 'KMSKS' region element; the sequence is PLSKR. K256 is a binding site for ATP.

The protein belongs to the class-I aminoacyl-tRNA synthetase family. Glutamate--tRNA ligase type 1 subfamily. In terms of assembly, monomer. Requires Zn(2+) as cofactor.

The protein resides in the cytoplasm. The enzyme catalyses tRNA(Glu) + L-glutamate + ATP = L-glutamyl-tRNA(Glu) + AMP + diphosphate. Functionally, catalyzes the attachment of glutamate to tRNA(Glu) in a two-step reaction: glutamate is first activated by ATP to form Glu-AMP and then transferred to the acceptor end of tRNA(Glu). In Alkalilimnicola ehrlichii (strain ATCC BAA-1101 / DSM 17681 / MLHE-1), this protein is Glutamate--tRNA ligase 2.